Reading from the N-terminus, the 101-residue chain is Small ribosomal subunit protein uS14 (101 aa).

This sequence belongs to the universal ribosomal protein uS14 family. In terms of assembly, part of the 30S ribosomal subunit. Contacts proteins S3 and S10.

In terms of biological role, binds 16S rRNA, required for the assembly of 30S particles and may also be responsible for determining the conformation of the 16S rRNA at the A site. The polypeptide is Small ribosomal subunit protein uS14 (Francisella philomiragia subsp. philomiragia (strain ATCC 25017 / CCUG 19701 / FSC 153 / O#319-036)).